The sequence spans 117 residues: Small ribosomal subunit protein uS12c (117 aa).

The interval 9 to 40 is disordered; the sequence is RNARQPIENRKKSPALRGCPQRRGTITPKKPN.

Belongs to the universal ribosomal protein uS12 family. Part of the 30S ribosomal subunit.

Its subcellular location is the plastid. It is found in the chloroplast. Functionally, with S4 and S5 plays an important role in translational accuracy. Located at the interface of the 30S and 50S subunits. The chain is Small ribosomal subunit protein uS12c (rps12) from Pinus koraiensis (Korean pine).